We begin with the raw amino-acid sequence, 629 residues long: Interleukin-23 receptor (629 aa).

The signal sequence occupies residues 1–23; the sequence is MNQVTIQWDAVIALYILFSWCHG. Residues 24 to 355 lie on the Extracellular side of the membrane; the sequence is GITNINCSGH…LTSDNRGDIG (332 aa). A glycan (N-linked (GlcNAc...) asparagine; partial) is linked at Asn29. Asn47, Asn81, and Asn141 each carry an N-linked (GlcNAc...) asparagine glycan. Fibronectin type-III domains follow at residues 127–217 and 219–318; these read IPDE…LDDI and IPSA…TPET. Residue Asn180 is glycosylated (N-linked (GlcNAc...) (high mannose) asparagine). Asn232 and Asn262 each carry an N-linked (GlcNAc...) asparagine glycan. Asn273 carries an N-linked (GlcNAc...) asparagine; partial glycan. Residues 356–376 traverse the membrane as a helical segment; that stretch reads LLLGMIVFAVMLSILSLIGIF. Over 377 to 629 the chain is Cytoplasmic; it reads NRSFRTGIKR…HFNRISLLEK (253 aa).

Belongs to the type I cytokine receptor family. Type 2 subfamily. In terms of assembly, heterodimer with IL12RB1. In presence of IL23, the heterodimer forms the IL23 receptor. Interacts with JAK2 and in presence of IL23 with STAT3. Phosphorylated in response to IL23. As to expression, expressed by monocytes, Th1, Th0, NK and dendritic cells. Isoform 1 is specifically expressed in NK cells.

It localises to the cell membrane. Associates with IL12RB1 to form the interleukin-23 receptor. Binds IL23 and mediates T-cells, NK cells and possibly certain macrophage/myeloid cells stimulation probably through activation of the Jak-Stat signaling cascade. IL23 functions in innate and adaptive immunity and may participate in acute response to infection in peripheral tissues. IL23 may be responsible for autoimmune inflammatory diseases and be important for tumorigenesis. The protein is Interleukin-23 receptor (IL23R) of Homo sapiens (Human).